The primary structure comprises 702 residues: MARTTPITRYRNIGISAHIDAGKTTTTERILFYTGVNHKIGEVHDGAATMDWMAQEQERGITITSAATTAFWSGMAKQFEPHRVNIIDTPGHVDFTIEVERSMRVLDGAVMVYCAVGGVQPQSETVWRQANKYKVPRIAFVNKMDRMGANFLKVVSQIKSRLAANPVPIQLAIGAEEKFTGVVDLVKMKAINWNEADAGVTFEYEEIPADMQELAEEWHQNLVESAAEASEELMEKYLGGEELTEEEIKKALRQRVLNNEVILVTCGSAFKNKGVQAMLDAVIEYLPAPTDVTAINGILDDGKDTPAVRHSDDKEPFAALAFKIATDPFVGNLTFFRVYSGVVNSGDTVMNPVKSQRERLGRIVQMHANKREEIKEVRAGDIAAAIGLKDVTTGDTLCDPSNVIILERMEFPEPVISVAVEPKTKADQEKMGLALGRLAKEDPSFRVWTDEESGQTIIAGMGELHLDILVDRMKREFNVEANVGKPQVAYRETIRETVKDVEGKHAKQSGGRGQFGHVVIDMGPLEAGGPGYEFVNDIVGGSIPKEFIPAVDKGIQEQLKSGPLAGYPVVDIKVRLHYGSYHDVDSSELAFKLAASLAFKSAFGKAKPVLLEPVMKVEVETPEDYMGDVIGDLNRRRGMIEGMEDTSTGKTVRAQVPLSEMFGYATDLRSQTQGRASYSMEFLKYAEAPNNVAQAVIEARGK.

The tr-type G domain occupies 8 to 290 (TRYRNIGISA…AVIEYLPAPT (283 aa)). Residues 17–24 (AHIDAGKT), 88–92 (DTPGH), and 142–145 (NKMD) contribute to the GTP site.

It belongs to the TRAFAC class translation factor GTPase superfamily. Classic translation factor GTPase family. EF-G/EF-2 subfamily.

The protein localises to the cytoplasm. Catalyzes the GTP-dependent ribosomal translocation step during translation elongation. During this step, the ribosome changes from the pre-translocational (PRE) to the post-translocational (POST) state as the newly formed A-site-bound peptidyl-tRNA and P-site-bound deacylated tRNA move to the P and E sites, respectively. Catalyzes the coordinated movement of the two tRNA molecules, the mRNA and conformational changes in the ribosome. The protein is Elongation factor G of Erwinia tasmaniensis (strain DSM 17950 / CFBP 7177 / CIP 109463 / NCPPB 4357 / Et1/99).